A 542-amino-acid chain; its full sequence is Prolyl 4-hydroxylase subunit alpha-3 (542 aa).

The N-terminal stretch at 1 to 24 (MGPGARLALLALLALGGDPAAATG) is a signal peptide. Residues 105 to 129 (LEATENIRALKDGYEKVEQDLPAFE) are a coiled coil. The stretch at 225–258 (EDALDYLAFACFQVGNVSCALSLSREFLVYSPDN) is one TPR repeat. Asn240 is a glycosylation site (N-linked (GlcNAc...) asparagine). Residues 420-527 (YAEYLQVVNY…KWVANKWIHE (108 aa)) form the Fe2OG dioxygenase domain. Residues His438 and Asp440 each contribute to the Fe cation site. A glycan (N-linked (GlcNAc...) asparagine) is linked at Asn480. His508 contacts Fe cation. Lys518 is a 2-oxoglutarate binding site.

This sequence belongs to the P4HA family. As to quaternary structure, heterotetramer of two alpha-3 chains and two beta chains (the beta chain is the multi-functional PDI). Fe(2+) serves as cofactor. Requires L-ascorbate as cofactor. In terms of processing, N-glycosylation plays no role in the catalytic activity.

It is found in the endoplasmic reticulum lumen. It catalyses the reaction L-prolyl-[collagen] + 2-oxoglutarate + O2 = trans-4-hydroxy-L-prolyl-[collagen] + succinate + CO2. Its function is as follows. Catalyzes the post-translational formation of 4-hydroxyproline in -Xaa-Pro-Gly- sequences in collagens and other proteins. The polypeptide is Prolyl 4-hydroxylase subunit alpha-3 (P4ha3) (Mus musculus (Mouse)).